The primary structure comprises 123 residues: Ragulator complex protein LAMTOR3-A (123 aa).

The protein belongs to the LAMTOR3 family. As to quaternary structure, part of the Ragulator complex composed of lamtor1, lamtor2, lamtor3, lamtor4 and lamtor5. The Ragulator complex interacts with slc38a9; the probable amino acid sensor. Component of the lysosomal folliculin complex (LFC).

The protein resides in the late endosome membrane. Its function is as follows. As part of the Ragulator complex it is involved in amino acid sensing and activation of mTORC1, a signaling complex promoting cell growth in response to growth factors, energy levels, and amino acids. Activated by amino acids through a mechanism involving the lysosomal V-ATPase, the Ragulator plays a dual role for the small GTPases Rag (RagA/RRAGA, RagB/RRAGB, RagC/RRAGC and/or RagD/RRAGD): it (1) acts as a guanine nucleotide exchange factor (GEF), activating the small GTPases Rag and (2) mediates recruitment of Rag GTPases to the lysosome membrane. Activated Ragulator and Rag GTPases function as a scaffold recruiting mTORC1 to lysosomes where it is in turn activated. This Xenopus laevis (African clawed frog) protein is Ragulator complex protein LAMTOR3-A (lamtor3-a).